The primary structure comprises 632 residues: 1-deoxy-D-xylulose-5-phosphate synthase (632 aa).

Residues H73 and 114–116 (SHA) each bind thiamine diphosphate. A Mg(2+)-binding site is contributed by D146. Thiamine diphosphate contacts are provided by residues 147–148 (GA), N176, Y287, and E368. Residue N176 participates in Mg(2+) binding.

It belongs to the transketolase family. DXPS subfamily. Homodimer. The cofactor is Mg(2+). Thiamine diphosphate is required as a cofactor.

The catalysed reaction is D-glyceraldehyde 3-phosphate + pyruvate + H(+) = 1-deoxy-D-xylulose 5-phosphate + CO2. It participates in metabolic intermediate biosynthesis; 1-deoxy-D-xylulose 5-phosphate biosynthesis; 1-deoxy-D-xylulose 5-phosphate from D-glyceraldehyde 3-phosphate and pyruvate: step 1/1. Its function is as follows. Catalyzes the acyloin condensation reaction between C atoms 2 and 3 of pyruvate and glyceraldehyde 3-phosphate to yield 1-deoxy-D-xylulose-5-phosphate (DXP). In Corynebacterium glutamicum (strain R), this protein is 1-deoxy-D-xylulose-5-phosphate synthase.